A 164-amino-acid chain; its full sequence is Protein-export protein SecB (164 aa).

Belongs to the SecB family. As to quaternary structure, homotetramer, a dimer of dimers. One homotetramer interacts with 1 SecA dimer.

It localises to the cytoplasm. Functionally, one of the proteins required for the normal export of preproteins out of the cell cytoplasm. It is a molecular chaperone that binds to a subset of precursor proteins, maintaining them in a translocation-competent state. It also specifically binds to its receptor SecA. This is Protein-export protein SecB from Orientia tsutsugamushi (strain Ikeda) (Rickettsia tsutsugamushi).